Consider the following 411-residue polypeptide: MNALAATSRNFRQAARLLGLDSKLEKSLLIPFREIKVECTIPKDDGTLASFIGFRVQHDNARGPMKGGIRYHPEVDPDEVNALAQLMTWKTAVAAIPYGGAKGGIGCAPGELSTSELERLTRVFTQKIHDLIGAHTDVPAPDMGTNSQTMAWILDEYSKFHGHSPAVVTGKPIDLGGSLGRDAATGRGVMYATEALLAEHGKSISGSTFVIQGFGNVGSWAARIIHEKGGKVIALGDVTGSIRNKNGLDIPALMKHRNEGGALKDFHDAEVMDSSELLVHECDVLIPCALGGVLNRENAPDVKAKFIIEAANHPTDPEADEILAKKGVTILPDIYANSGGVIVSYFEWVQNIQGFMWDEEKVNMELHKYMNNSFQHIKAMCKSHDCNLRMGAFTLGVNRVARATLLRGWEA.

A mitochondrion-targeting transit peptide spans 1-18; that stretch reads MNALAATSRNFRQAARLL. Residue K102 is part of the active site.

It belongs to the Glu/Leu/Phe/Val dehydrogenases family. As to expression, expressed in roots. Expressed ubiquitously in various tissues.

The protein localises to the mitochondrion. It catalyses the reaction L-glutamate + NAD(+) + H2O = 2-oxoglutarate + NH4(+) + NADH + H(+). It carries out the reaction L-glutamate + NADP(+) + H2O = 2-oxoglutarate + NH4(+) + NADPH + H(+). The protein is Glutamate dehydrogenase 2, mitochondrial (GDH2) of Oryza sativa subsp. japonica (Rice).